The chain runs to 316 residues: tRNA pseudouridine synthase B (316 aa).

D38 functions as the Nucleophile in the catalytic mechanism. The PUA domain maps to 238–312 (YPEVIVKSSA…PVCVLARQAG (75 aa)).

This sequence belongs to the pseudouridine synthase TruB family. Type 1 subfamily.

It carries out the reaction uridine(55) in tRNA = pseudouridine(55) in tRNA. Its function is as follows. Responsible for synthesis of pseudouridine from uracil-55 in the psi GC loop of transfer RNAs. This Pelotomaculum thermopropionicum (strain DSM 13744 / JCM 10971 / SI) protein is tRNA pseudouridine synthase B.